Reading from the N-terminus, the 320-residue chain is Ferrochelatase (320 aa).

The Fe cation site is built by H194 and E275.

The protein belongs to the ferrochelatase family.

Its subcellular location is the cytoplasm. The catalysed reaction is heme b + 2 H(+) = protoporphyrin IX + Fe(2+). Its pathway is porphyrin-containing compound metabolism; protoheme biosynthesis; protoheme from protoporphyrin-IX: step 1/1. Catalyzes the ferrous insertion into protoporphyrin IX. The chain is Ferrochelatase from Xylella fastidiosa (strain 9a5c).